The primary structure comprises 332 residues: Ubiquinone biosynthesis protein COQ4, mitochondrial (332 aa).

The transit peptide at 1-24 (MLRLGVSRTPINRQFVGYEQRRHF) directs the protein to the mitochondrion. Zn(2+) contacts are provided by His-210, Asp-211, His-214, and Glu-226.

Belongs to the COQ4 family. As to quaternary structure, component of a multi-subunit COQ enzyme complex, composed of at least COQ3, COQ4, COQ5, COQ6, COQ7 and COQ9. It depends on Zn(2+) as a cofactor.

Its subcellular location is the mitochondrion inner membrane. The catalysed reaction is a 4-hydroxy-3-methoxy-5-(all-trans-polyprenyl)benzoate + H(+) = a 2-methoxy-6-(all-trans-polyprenyl)phenol + CO2. It participates in cofactor biosynthesis; ubiquinone biosynthesis. Lyase that catalyzes the C1-decarboxylation of 4-hydroxy-3-methoxy-5-(all-trans-polyprenyl)benzoic acid into 2-methoxy-6-(all-trans-polyprenyl)phenol during ubiquinone biosynthesis. This chain is Ubiquinone biosynthesis protein COQ4, mitochondrial, found in Zygosaccharomyces rouxii (strain ATCC 2623 / CBS 732 / NBRC 1130 / NCYC 568 / NRRL Y-229).